Consider the following 50-residue polypeptide: Disintegrin pyramidin-A (50 aa).

The 47-residue stretch at 1-47 (DCASGPCCRDCKFLKEGTICKRARGDNMDDYCNGKTCDCPRNPHKGE) folds into the Disintegrin domain. Disulfide bonds link cysteine 2–cysteine 11, cysteine 7–cysteine 32, cysteine 8–cysteine 37, and cysteine 20–cysteine 39. Positions 24–26 (RGD) match the Cell attachment site motif.

Belongs to the venom metalloproteinase (M12B) family. P-II subfamily. P-IIa sub-subfamily. In terms of assembly, monomer (disintegrin). In terms of tissue distribution, expressed by the venom gland.

Its subcellular location is the secreted. Functionally, inhibits ADP-induced human platelet aggregation. In Echis pyramidum leakeyi (Leakey's carpet viper), this protein is Disintegrin pyramidin-A.